The chain runs to 252 residues: Chitooligosaccharide deacetylase (252 aa).

Residues H61 and H125 each coordinate Mg(2+).

It belongs to the YdjC deacetylase family. ChbG subfamily. In terms of assembly, homodimer. It depends on Mg(2+) as a cofactor.

It localises to the cytoplasm. The catalysed reaction is N,N'-diacetylchitobiose + H2O = N-acetyl-beta-D-glucosaminyl-(1-&gt;4)-D-glucosamine + acetate. It carries out the reaction diacetylchitobiose-6'-phosphate + H2O = N'-monoacetylchitobiose-6'-phosphate + acetate. Its pathway is glycan degradation; chitin degradation. In terms of biological role, involved in the degradation of chitin. ChbG is essential for growth on the acetylated chitooligosaccharides chitobiose and chitotriose but is dispensable for growth on cellobiose and chitosan dimer, the deacetylated form of chitobiose. Deacetylation of chitobiose-6-P and chitotriose-6-P is necessary for both the activation of the chb promoter by the regulatory protein ChbR and the hydrolysis of phosphorylated beta-glucosides by the phospho-beta-glucosidase ChbF. Catalyzes the removal of only one acetyl group from chitobiose-6-P to yield monoacetylchitobiose-6-P, the inducer of ChbR and the substrate of ChbF. The sequence is that of Chitooligosaccharide deacetylase from Escherichia fergusonii (strain ATCC 35469 / DSM 13698 / CCUG 18766 / IAM 14443 / JCM 21226 / LMG 7866 / NBRC 102419 / NCTC 12128 / CDC 0568-73).